Here is a 914-residue protein sequence, read N- to C-terminus: Valine--tRNA ligase (914 aa).

The 'HIGH' region signature appears at 45–55 (PNVTGSLHMGH). The 'KMSKS' region signature appears at 538–542 (KMSKS). Residue Lys-541 participates in ATP binding. A coiled-coil region spans residues 847–914 (LVDLDALKGR…LARKRLADLS (68 aa)).

The protein belongs to the class-I aminoacyl-tRNA synthetase family. ValS type 1 subfamily. Monomer.

The protein localises to the cytoplasm. The enzyme catalyses tRNA(Val) + L-valine + ATP = L-valyl-tRNA(Val) + AMP + diphosphate. Catalyzes the attachment of valine to tRNA(Val). As ValRS can inadvertently accommodate and process structurally similar amino acids such as threonine, to avoid such errors, it has a 'posttransfer' editing activity that hydrolyzes mischarged Thr-tRNA(Val) in a tRNA-dependent manner. This chain is Valine--tRNA ligase, found in Parasynechococcus marenigrum (strain WH8102).